The chain runs to 508 residues: MARTIKIFDTTLRDGEQTPGVNLNLQEKLEIAKQLVRLGVDVIEGGFAIASPGDFESIMTLSRNLKGVTIASLCRSVEKDIDRAWEAVQYAESPRIHTFIATSDIHMKYKLKMTEEEVLERAVSMVKRAKGYCSNVEFSAEDASRTREEFLYRVVEAVIKAGATTVNIPDTVGYSTPLEFGRLIRNIRNNVPNIDKADISVHCHNDLGLAVANSLAAVENGAVQVECTINGLGERAGNAALEEIIMGINTRKDYYDITHRIDTTQIYRASRLVSSLTGVNVQPNKAIVGANAFAHESGIHQHGVLSEKTTYEIMTPESVGMGTNRMVLGKLSGRHAFEDRLKEMGYSLSDEEVKTAFAKFKDLADKKKVVTDKDIEALVDENIAVPEIFVIDSFQINSGNKMISTSTVSVRKDEEIITEAATGDGPVDAAFNAVERATGVNAELVHYRIKAVTEGKDALGEVTVKISNNNSIFMGKGVSTDIIEASVKAYLNAINRSISEIGESIISQ.

Residues 5-267 (IKIFDTTLRD…THRIDTTQIY (263 aa)) form the Pyruvate carboxyltransferase domain. D14, H202, H204, and N238 together coordinate Mn(2+). A regulatory domain region spans residues 390–508 (VIDSFQINSG…SEIGESIISQ (119 aa)).

It belongs to the alpha-IPM synthase/homocitrate synthase family. LeuA type 1 subfamily. Homodimer. Mn(2+) is required as a cofactor.

Its subcellular location is the cytoplasm. The catalysed reaction is 3-methyl-2-oxobutanoate + acetyl-CoA + H2O = (2S)-2-isopropylmalate + CoA + H(+). It participates in amino-acid biosynthesis; L-leucine biosynthesis; L-leucine from 3-methyl-2-oxobutanoate: step 1/4. Functionally, catalyzes the condensation of the acetyl group of acetyl-CoA with 3-methyl-2-oxobutanoate (2-ketoisovalerate) to form 3-carboxy-3-hydroxy-4-methylpentanoate (2-isopropylmalate). In Ruminiclostridium cellulolyticum (strain ATCC 35319 / DSM 5812 / JCM 6584 / H10) (Clostridium cellulolyticum), this protein is 2-isopropylmalate synthase.